The chain runs to 612 residues: Pentatricopeptide repeat-containing protein At4g14050, mitochondrial (612 aa).

Residues 1–24 constitute a mitochondrion transit peptide; sequence MLIPHYLHQLQLCARNRTLTTAKA. PPR repeat units lie at residues 37–71, 72–103, 104–138, 139–169, 170–204, 205–235, 237–271, 272–302, 303–337, 338–373, and 374–408; these read CCPL…DHIA, WASV…GLRP, DDFV…EYAN, DEVV…IRVK, NTIS…NLYS, WTAL…RVDI, DPLV…GFDS, CVFI…MRHR, DVVS…GVKP, NEVT…GIRP, and SLQH…PDEP. The interval 409–485 is type E motif; that stretch reads TWAALLSACK…DPGHSSVEVR (77 aa). The tract at residues 486 to 516 is type E(+) motif; the sequence is KETEVFYAGETSHPLKEDIFRLLKKLEEEMR. Residues 518–612 are type DYW motif; that stretch reads RNGYVPDTSW…GGKCSCNDFW (95 aa).

Belongs to the PPR family. PCMP-H subfamily. In terms of assembly, interacts with MORF8/RIP1 and MORF1/RIP8.

Its subcellular location is the mitochondrion. In terms of biological role, involved in C-to-U editing of mitochondrial RNA. Required specifically for editing the mitochondrial NAD4, MT-CYB/COB and RPL16 transcripts. The chain is Pentatricopeptide repeat-containing protein At4g14050, mitochondrial (PCMP-H13) from Arabidopsis thaliana (Mouse-ear cress).